A 119-amino-acid chain; its full sequence is Large ribosomal subunit protein uL22 (119 aa).

This sequence belongs to the universal ribosomal protein uL22 family. Part of the 50S ribosomal subunit.

In terms of biological role, this protein binds specifically to 23S rRNA; its binding is stimulated by other ribosomal proteins, e.g. L4, L17, and L20. It is important during the early stages of 50S assembly. It makes multiple contacts with different domains of the 23S rRNA in the assembled 50S subunit and ribosome. Functionally, the globular domain of the protein is located near the polypeptide exit tunnel on the outside of the subunit, while an extended beta-hairpin is found that lines the wall of the exit tunnel in the center of the 70S ribosome. This chain is Large ribosomal subunit protein uL22, found in Bifidobacterium adolescentis (strain ATCC 15703 / DSM 20083 / NCTC 11814 / E194a).